Here is a 443-residue protein sequence, read N- to C-terminus: Glutamate-rich protein 1 (443 aa).

Lysine 12 is modified (N6-acetyllysine). Positions 15–333 (QRLFPPVPSG…DASEEDDTIT (319 aa)) are disordered. Residues 42-54 (VTSEKVSQKHAEP) show a composition bias toward basic and acidic residues. A compositionally biased stretch (polar residues) spans 87–97 (SCGSPENASSG). 2 stretches are compositionally biased toward basic residues: residues 109–124 (PKRR…KKFK) and 159–176 (KNKK…RKKA). Acidic residues predominate over residues 205 to 226 (ACEEDGVDTSEEDPTLAGEEDV). Phosphoserine occurs at positions 238 and 254. A compositionally biased stretch (acidic residues) spans 250–266 (GADASEEDPTPAGEEDV). Threonine 277 bears the Phosphothreonine mark. Over residues 281-296 (DLTRAGEEDGKDTREE) the composition is skewed to basic and acidic residues. Positions 297–332 (DGADASEEDPTWAGEEEGADSGEEDGADASEEDDTI) are enriched in acidic residues.

The chain is Glutamate-rich protein 1 (ERICH1) from Homo sapiens (Human).